Here is a 119-residue protein sequence, read N- to C-terminus: Hisactophilin-3 (119 aa).

G2 is lipidated: N-myristoyl glycine. The contains several HHXH repeats stretch occupies residues 8–110 (SHHGHFLSAE…SIYTTHHHHH (103 aa)). 2 repeat units span residues 34-47 (FHVE…VAIR) and 75-87 (FHLE…VSIK). The segment at 34 to 87 (FHVENHGHHKVAIRTHANKYVSINDNNDVYISHHFHGEHSLFHLEHHGGKVSIK) is 2 X 13 AA approximate repeats.

The protein belongs to the hisactophilin family. Post-translationally, phosphorylated.

The protein resides in the cytoplasm. Its subcellular location is the cell membrane. Functionally, may act as an intracellular pH sensor that links chemotactic signals to responses in the microfilament system of the cells by nucleating actin polymerization or stabilizing the filaments. The sequence is that of Hisactophilin-3 (hatC) from Dictyostelium discoideum (Social amoeba).